Here is a 414-residue protein sequence, read N- to C-terminus: Esterase FrsA (414 aa).

Belongs to the FrsA family.

The catalysed reaction is a carboxylic ester + H2O = an alcohol + a carboxylate + H(+). Its function is as follows. Catalyzes the hydrolysis of esters. This chain is Esterase FrsA, found in Citrobacter koseri (strain ATCC BAA-895 / CDC 4225-83 / SGSC4696).